Here is a 548-residue protein sequence, read N- to C-terminus: Glucose-6-phosphate isomerase 1 (548 aa).

Glu353 functions as the Proton donor in the catalytic mechanism. Active-site residues include His384 and Lys512.

Belongs to the GPI family.

Its subcellular location is the cytoplasm. It catalyses the reaction alpha-D-glucose 6-phosphate = beta-D-fructose 6-phosphate. Its pathway is carbohydrate biosynthesis; gluconeogenesis. It participates in carbohydrate degradation; glycolysis; D-glyceraldehyde 3-phosphate and glycerone phosphate from D-glucose: step 2/4. Functionally, catalyzes the reversible isomerization of glucose-6-phosphate to fructose-6-phosphate. In Neisseria meningitidis serogroup A / serotype 4A (strain DSM 15465 / Z2491), this protein is Glucose-6-phosphate isomerase 1.